Reading from the N-terminus, the 160-residue chain is Phosphopantetheine adenylyltransferase (160 aa).

Substrate is bound at residue Ser11. ATP contacts are provided by residues Ser11–Phe12 and His19. Residues Lys43, Leu75, and Arg89 each coordinate substrate. Residues Gly90–Arg92, Glu100, and Tyr125–Ser131 contribute to the ATP site.

Belongs to the bacterial CoaD family. In terms of assembly, homohexamer. It depends on Mg(2+) as a cofactor.

The protein resides in the cytoplasm. The enzyme catalyses (R)-4'-phosphopantetheine + ATP + H(+) = 3'-dephospho-CoA + diphosphate. The protein operates within cofactor biosynthesis; coenzyme A biosynthesis; CoA from (R)-pantothenate: step 4/5. In terms of biological role, reversibly transfers an adenylyl group from ATP to 4'-phosphopantetheine, yielding dephospho-CoA (dPCoA) and pyrophosphate. The protein is Phosphopantetheine adenylyltransferase of Staphylococcus aureus (strain Mu3 / ATCC 700698).